The primary structure comprises 489 residues: Glycogen synthase (489 aa).

Lysine 15 contributes to the ADP-alpha-D-glucose binding site.

Belongs to the glycosyltransferase 1 family. Bacterial/plant glycogen synthase subfamily.

It catalyses the reaction [(1-&gt;4)-alpha-D-glucosyl](n) + ADP-alpha-D-glucose = [(1-&gt;4)-alpha-D-glucosyl](n+1) + ADP + H(+). Its pathway is glycan biosynthesis; glycogen biosynthesis. In terms of biological role, synthesizes alpha-1,4-glucan chains using ADP-glucose. This is Glycogen synthase from Francisella tularensis subsp. tularensis (strain SCHU S4 / Schu 4).